Here is a 219-residue protein sequence, read N- to C-terminus: Small ribosomal subunit protein uS3c (219 aa).

Residues 47–118 (IKKNIRISSG…KINIAITRIT (72 aa)) form the KH type-2 domain.

Belongs to the universal ribosomal protein uS3 family. Part of the 30S ribosomal subunit.

Its subcellular location is the plastid. The protein resides in the chloroplast. The sequence is that of Small ribosomal subunit protein uS3c (rps3) from Citrus sinensis (Sweet orange).